Here is a 289-residue protein sequence, read N- to C-terminus: Diaminopimelate epimerase (289 aa).

The substrate site is built by N11 and N78. Catalysis depends on C87, which acts as the Proton donor. Substrate contacts are provided by residues 88–89 (GN), N163, N199, and 217–218 (ER). Residue C226 is the Proton acceptor of the active site. Substrate is bound at residue 227 to 228 (GT).

Belongs to the diaminopimelate epimerase family. As to quaternary structure, homodimer.

The protein localises to the cytoplasm. The enzyme catalyses (2S,6S)-2,6-diaminopimelate = meso-2,6-diaminopimelate. The protein operates within amino-acid biosynthesis; L-lysine biosynthesis via DAP pathway; DL-2,6-diaminopimelate from LL-2,6-diaminopimelate: step 1/1. Catalyzes the stereoinversion of LL-2,6-diaminopimelate (L,L-DAP) to meso-diaminopimelate (meso-DAP), a precursor of L-lysine and an essential component of the bacterial peptidoglycan. The protein is Diaminopimelate epimerase of Rhodococcus jostii (strain RHA1).